Here is a 491-residue protein sequence, read N- to C-terminus: Pentatricopeptide repeat-containing protein At5g27460 (491 aa).

10 PPR repeats span residues 69-99 (SLSE…MENQ), 105-139 (SVYD…SVSM), 142-176 (AKSA…GFLV), 177-211 (TPHP…KIPR), 212-246 (NVLS…KSVE), 248-278 (GWSS…AEKM), 283-313 (NRLG…SKSV), 318-348 (SCVN…WEAQ), 353-387 (DVRV…GGTP), and 388-426 (NYKT…HWRP).

The protein belongs to the PPR family. P subfamily.

This Arabidopsis thaliana (Mouse-ear cress) protein is Pentatricopeptide repeat-containing protein At5g27460.